A 422-amino-acid polypeptide reads, in one-letter code: UDP-N-acetylglucosamine 1-carboxyvinyltransferase (422 aa).

22 to 23 is a phosphoenolpyruvate binding site; it reads KN. Residue arginine 95 participates in UDP-N-acetyl-alpha-D-glucosamine binding. Cysteine 119 functions as the Proton donor in the catalytic mechanism. Residue cysteine 119 is modified to 2-(S-cysteinyl)pyruvic acid O-phosphothioketal. UDP-N-acetyl-alpha-D-glucosamine-binding positions include 124–128, aspartate 309, and valine 331; that span reads RPIDQ.

This sequence belongs to the EPSP synthase family. MurA subfamily.

Its subcellular location is the cytoplasm. It carries out the reaction phosphoenolpyruvate + UDP-N-acetyl-alpha-D-glucosamine = UDP-N-acetyl-3-O-(1-carboxyvinyl)-alpha-D-glucosamine + phosphate. It functions in the pathway cell wall biogenesis; peptidoglycan biosynthesis. Cell wall formation. Adds enolpyruvyl to UDP-N-acetylglucosamine. In Anaeromyxobacter sp. (strain Fw109-5), this protein is UDP-N-acetylglucosamine 1-carboxyvinyltransferase.